Reading from the N-terminus, the 127-residue chain is Large ribosomal subunit protein bL17 (127 aa).

Belongs to the bacterial ribosomal protein bL17 family. Part of the 50S ribosomal subunit. Contacts protein L32.

In Enterococcus faecalis (strain ATCC 700802 / V583), this protein is Large ribosomal subunit protein bL17.